A 207-amino-acid polypeptide reads, in one-letter code: Pyridoxine/pyridoxamine 5'-phosphate oxidase (207 aa).

Residues 53 to 58 (RMVLLK), 68 to 69 (YT), K75, and Q97 contribute to the FMN site. K58 is a binding site for substrate. Residues Y115, R119, and S123 each contribute to the substrate site. FMN is bound by residues 132 to 133 (QS) and W177. 183 to 185 (RLH) is a binding site for substrate. R187 lines the FMN pocket.

The protein belongs to the pyridoxamine 5'-phosphate oxidase family. In terms of assembly, homodimer. FMN serves as cofactor.

It carries out the reaction pyridoxamine 5'-phosphate + O2 + H2O = pyridoxal 5'-phosphate + H2O2 + NH4(+). The catalysed reaction is pyridoxine 5'-phosphate + O2 = pyridoxal 5'-phosphate + H2O2. The protein operates within cofactor metabolism; pyridoxal 5'-phosphate salvage; pyridoxal 5'-phosphate from pyridoxamine 5'-phosphate: step 1/1. It functions in the pathway cofactor metabolism; pyridoxal 5'-phosphate salvage; pyridoxal 5'-phosphate from pyridoxine 5'-phosphate: step 1/1. Its function is as follows. Catalyzes the oxidation of either pyridoxine 5'-phosphate (PNP) or pyridoxamine 5'-phosphate (PMP) into pyridoxal 5'-phosphate (PLP). This Bartonella quintana (strain Toulouse) (Rochalimaea quintana) protein is Pyridoxine/pyridoxamine 5'-phosphate oxidase.